The primary structure comprises 469 residues: Deoxyribodipyrimidine photo-lyase (469 aa).

The region spanning 1 to 133 (MRLVWFRRDL…IWSAFDDKCV (133 aa)) is the Photolyase/cryptochrome alpha/beta domain. Glu-107 is a (6R)-5,10-methylene-5,6,7,8-tetrahydrofolate binding site.

This sequence belongs to the DNA photolyase class-1 family. Monomer. The cofactor is FAD. (6R)-5,10-methylene-5,6,7,8-tetrahydrofolate is required as a cofactor.

The catalysed reaction is cyclobutadipyrimidine (in DNA) = 2 pyrimidine residues (in DNA).. Involved in repair of UV radiation-induced DNA damage. Catalyzes the light-dependent monomerization (300-600 nm) of cyclobutyl pyrimidine dimers (in cis-syn configuration), which are formed between adjacent bases on the same DNA strand upon exposure to ultraviolet radiation. The protein is Deoxyribodipyrimidine photo-lyase (phrA) of Vibrio cholerae serotype O1 (strain ATCC 39315 / El Tor Inaba N16961).